Here is a 180-residue protein sequence, read N- to C-terminus: Inorganic pyrophosphatase (180 aa).

Substrate contacts are provided by Lys28, Arg42, and Tyr54. Residues Asp66, Asp71, and Asp102 each coordinate Mg(2+). Residue Tyr139 participates in substrate binding.

The protein belongs to the PPase family. Homohexamer. The cofactor is Mg(2+).

It is found in the cytoplasm. It catalyses the reaction diphosphate + H2O = 2 phosphate + H(+). In terms of biological role, hydrolyzes PPi generated in anabolic reactions. Catalyzes the hydrolysis of inorganic pyrophosphate (PPi) forming two phosphate ions. The sequence is that of Inorganic pyrophosphatase from Pseudanabaena sp. (strain PCC 6903).